Reading from the N-terminus, the 533-residue chain is tRNA(Ile)-lysidine synthase (533 aa).

Residue 21–26 (SGGADS) coordinates ATP. The CMP/dCMP-type deaminase domain maps to 377–500 (DLLDTAMGEA…DLLSSHWGHV (124 aa)).

This sequence belongs to the tRNA(Ile)-lysidine synthase family.

Its subcellular location is the cytoplasm. The enzyme catalyses cytidine(34) in tRNA(Ile2) + L-lysine + ATP = lysidine(34) in tRNA(Ile2) + AMP + diphosphate + H(+). Functionally, ligates lysine onto the cytidine present at position 34 of the AUA codon-specific tRNA(Ile) that contains the anticodon CAU, in an ATP-dependent manner. Cytidine is converted to lysidine, thus changing the amino acid specificity of the tRNA from methionine to isoleucine. This chain is tRNA(Ile)-lysidine synthase, found in Deinococcus deserti (strain DSM 17065 / CIP 109153 / LMG 22923 / VCD115).